Here is a 185-residue protein sequence, read N- to C-terminus: MIAEIKKSAEQKMQKSLEALKLDLGKIRTGRAHTGLLDHVTVDYYGNPTAINQVANISLADARTITVAPWEKKMLGAIEKAIRNSDLGLNPTTVGELIRVPMPPLTEERRRDLTKVVKHEGEAARVAMRNIRRDANAHLKDLLKEKKIAEDEERKGQEDIQKLTDRYIADIDKLLQAKEAELMAV.

It belongs to the RRF family.

Its subcellular location is the cytoplasm. Functionally, responsible for the release of ribosomes from messenger RNA at the termination of protein biosynthesis. May increase the efficiency of translation by recycling ribosomes from one round of translation to another. This Nitrosospira multiformis (strain ATCC 25196 / NCIMB 11849 / C 71) protein is Ribosome-recycling factor.